The chain runs to 248 residues: Trypsin I-P38 (248 aa).

A signal peptide spans 1–15 (MKFLVLVAFLGVAVA). Residues 16–25 (FPISDEDDDK) constitute a propeptide, activation peptide. One can recognise a Peptidase S1 domain in the interval 26–246 (IVGGYSCARS…YVSWIKTTMS (221 aa)). Disulfide bonds link Cys-32/Cys-162, Cys-50/Cys-66, Cys-134/Cys-235, Cys-141/Cys-208, Cys-173/Cys-187, and Cys-198/Cys-222. Catalysis depends on His-65, which acts as the Charge relay system. Ca(2+) is bound by residues Glu-77, Asn-79, and Glu-87. Asp-109 (charge relay system) is an active-site residue. Catalysis depends on Ser-202, which acts as the Charge relay system.

It belongs to the peptidase S1 family. Ca(2+) is required as a cofactor. In terms of tissue distribution, high levels are seen in the pancreas while lower levels are found in the liver, spleen and thymus.

The protein resides in the secreted. The protein localises to the extracellular space. The catalysed reaction is Preferential cleavage: Arg-|-Xaa, Lys-|-Xaa.. This chain is Trypsin I-P38, found in Gallus gallus (Chicken).